We begin with the raw amino-acid sequence, 130 residues long: MNSKVGNKNNKRAAGSIGEAAAVQFLKENNYEILETNFRYRRLGEIDIISREKDYICFVEVKARSSLGYGYPREAVNIRKQENIRRLAQIYLCKNRINDLKVRFDVVEVYMEKKGDDIEVKEISLIKNAF.

The protein belongs to the UPF0102 family.

The protein is UPF0102 protein Cthe_0758 of Acetivibrio thermocellus (strain ATCC 27405 / DSM 1237 / JCM 9322 / NBRC 103400 / NCIMB 10682 / NRRL B-4536 / VPI 7372) (Clostridium thermocellum).